A 1181-amino-acid chain; its full sequence is 1-phosphatidylinositol 4,5-bisphosphate phosphodiesterase beta-2 (1181 aa).

One can recognise a PI-PLC X-box domain in the interval 312-463 (QDMTQPLNHY…LRGKILIKNK (152 aa)). The active site involves histidine 327. Ca(2+) is bound by residues asparagine 328, glutamate 357, and aspartate 359. Histidine 374 is a catalytic residue. Position 408 (glutamate 408) interacts with Ca(2+). The segment at 465 to 534 (NQFSGPASPS…EEIKKMQSDE (70 aa)) is disordered. The segment covering 503 to 525 (TEVEEEEVVEEEEEEESGNLDEE) has biased composition (acidic residues). Positions 547–663 (MSSLVNYIQP…GYLLKHEFMR (117 aa)) constitute a PI-PLC Y-box domain. Positions 666-791 (DKQFNPFSVD…CLRSESNMAL (126 aa)) constitute a C2 domain. The interval 847-890 (SGTPVASQSNGAPVSAGNGSTAPGTKATGEEATKEVTEPQTASL) is disordered. Residues 850-869 (PVASQSNGAPVSAGNGSTAP) show a composition bias toward polar residues. Residues 874–883 (TGEEATKEVT) are compositionally biased toward basic and acidic residues. Residues 893-940 (LRELKGVVKLQRRHEKELRELERRGARRWEELLQRGAAQLAELQTQAA) are a coiled coil. Serine 950 is subject to Phosphoserine. 2 coiled-coil regions span residues 974–1026 (PRVQ…AELK) and 1075–1141 (HIQE…VRAY). The segment at 1149 to 1181 (EAEDKPERSCEASEESCPQEPLVSKADTQESRL) is disordered. Basic and acidic residues predominate over residues 1150-1159 (AEDKPERSCE).

As to quaternary structure, interacts with RAC1. Forms a complex composed of at least WDR26, a G-beta:gamma unit, and PLCB2. Ca(2+) is required as a cofactor.

The catalysed reaction is a 1,2-diacyl-sn-glycero-3-phospho-(1D-myo-inositol-4,5-bisphosphate) + H2O = 1D-myo-inositol 1,4,5-trisphosphate + a 1,2-diacyl-sn-glycerol + H(+). The enzyme catalyses a 1,2-diacyl-sn-glycero-3-phospho-(1D-myo-inositol) + H2O = 1D-myo-inositol 1-phosphate + a 1,2-diacyl-sn-glycerol + H(+). Its function is as follows. The production of the second messenger molecules diacylglycerol (DAG) and inositol 1,4,5-trisphosphate (IP3) is mediated by activated phosphatidylinositol-specific phospholipase C enzymes. In neutrophils, participates in a phospholipase C-activating N-formyl peptide-activated GPCR (G protein-coupled receptor) signaling pathway by promoting RASGRP4 activation by DAG, to promote neutrophil functional responses. This is 1-phosphatidylinositol 4,5-bisphosphate phosphodiesterase beta-2 from Mus musculus (Mouse).